Reading from the N-terminus, the 37-residue chain is Protein YnaM (37 aa).

Residues 4 to 24 (ILIITSLLIIFSIFSHALIKL) form a helical membrane-spanning segment.

It localises to the cell inner membrane. The polypeptide is Protein YnaM (Escherichia coli (strain K12)).